The following is a 591-amino-acid chain: Inactive metallocarboxypeptidase ECM14 (591 aa).

An N-terminal signal peptide occupies residues 1–21 (MRLFSHLAVLAILACAVPITA). Positions 22–175 (IPSFLSNSYP…QTIYESYPSS (154 aa)) are excised as a propeptide. Residues 203–523 (DYQPFSVIVP…NAVMVLGRFL (321 aa)) form the Peptidase M14 domain. Positions 265 and 268 each coordinate Zn(2+). Substrate-binding positions include 265-268 (HARE), arginine 323, and 340-341 (DR). A disulfide bond links cysteine 334 and cysteine 357. 3 N-linked (GlcNAc...) asparagine glycosylation sites follow: asparagine 350, asparagine 381, and asparagine 386. Histidine 397 serves as a coordination point for Zn(2+). 398 to 399 (SY) lines the substrate pocket. Positions 533 to 591 (DWEDESQRPKADEDDIPSENELDENDDSWIPYDYRNHDDQNEGEGYDNDEWGFRRRRKR) are disordered. Composition is skewed to acidic residues over residues 544-559 (DEDDIPSENELDENDD) and 573-582 (NEGEGYDNDE).

Belongs to the peptidase M14 family. Zn(2+) serves as cofactor.

It is found in the vacuole. It localises to the secreted. Functionally, inactive carboxypeptidase that may play a role in cell wall organization and biogenesis. In Paracoccidioides brasiliensis (strain Pb18), this protein is Inactive metallocarboxypeptidase ECM14 (ECM14).